We begin with the raw amino-acid sequence, 266 residues long: Isopentenyl phosphate kinase (266 aa).

An ATP-binding site is contributed by Lys5–Ser9. Ala47 is a substrate binding site. Position 48 (Gly48) interacts with ATP. Substrate contacts are provided by His52 and Gly157. Residues Asp178, Tyr183–Lys188, Gly219, and Lys223 contribute to the ATP site.

It belongs to the isopentenyl phosphate kinase family. In terms of assembly, homodimer.

The enzyme catalyses isopentenyl phosphate + ATP = isopentenyl diphosphate + ADP. Functionally, catalyzes the formation of isopentenyl diphosphate (IPP), the building block of all isoprenoids. Has lower activity with dimethylallyl phosphate (DMAP) and isopentenyl thiolophosphate (ISP). Has low activity with 1-butyl phosphate (BP) and 3-buten-1-yl phosphate (BEP). Has no significant activity with geranyl phosphate (in vitro). The sequence is that of Isopentenyl phosphate kinase from Methanothermobacter thermautotrophicus (strain ATCC 29096 / DSM 1053 / JCM 10044 / NBRC 100330 / Delta H) (Methanobacterium thermoautotrophicum).